A 219-amino-acid polypeptide reads, in one-letter code: Tritrans,polycis-undecaprenyl-diphosphate synthase (geranylgeranyl-diphosphate specific) (219 aa).

Aspartate 12 is an active-site residue. Aspartate 12 is a binding site for Mg(2+). Substrate-binding positions include 13–16, tryptophan 17, and 59–61; these read GNRR and SRD. Asparagine 62 acts as the Proton acceptor in catalysis. Substrate-binding positions include arginine 66, arginine 168, and 174-176; that span reads RLS. Residue glutamate 187 coordinates Mg(2+).

Belongs to the UPP synthase family. As to quaternary structure, homodimer. The cofactor is Mg(2+).

It catalyses the reaction geranylgeranyl diphosphate + 7 isopentenyl diphosphate = tri-trans,hepta-cis-undecaprenyl diphosphate + 7 diphosphate. Its function is as follows. Catalyzes the sequential condensation of isopentenyl diphosphate (IPP) with geranylgeranyl diphosphate (GGPP) to yield (2Z,6Z,10Z,14Z,18Z,22Z,26Z,30E,34E,38E)-undecaprenyl diphosphate (tritrans,heptacis-UPP). It is probably the precursor of glycosyl carrier lipids. This is Tritrans,polycis-undecaprenyl-diphosphate synthase (geranylgeranyl-diphosphate specific) from Aeropyrum pernix (strain ATCC 700893 / DSM 11879 / JCM 9820 / NBRC 100138 / K1).